The sequence spans 200 residues: Adenylate kinase (200 aa).

10 to 15 (GAGKGT) contributes to the ATP binding site. The tract at residues 30–59 (STGDMLRAAVAAGTPVGLEAKAVMESGGLV) is NMP. Residues threonine 31, arginine 36, 57–59 (GLV), 85–88 (GFPR), and glutamine 92 contribute to the AMP site. Positions 126–142 (KRAAETLARGQAVRKDD) are LID. Residue arginine 127 coordinates ATP. AMP contacts are provided by arginine 139 and arginine 150. Glutamine 178 is an ATP binding site.

It belongs to the adenylate kinase family. In terms of assembly, monomer.

It localises to the cytoplasm. It catalyses the reaction AMP + ATP = 2 ADP. The protein operates within purine metabolism; AMP biosynthesis via salvage pathway; AMP from ADP: step 1/1. Functionally, catalyzes the reversible transfer of the terminal phosphate group between ATP and AMP. Plays an important role in cellular energy homeostasis and in adenine nucleotide metabolism. This is Adenylate kinase from Methylobacterium radiotolerans (strain ATCC 27329 / DSM 1819 / JCM 2831 / NBRC 15690 / NCIMB 10815 / 0-1).